The chain runs to 177 residues: MLGCGIPALGLLLLLQGSADGNGIQGFFYPWSCEGDIWDRESCGGQAAIDSPNLCLRLRCCYRNGVCYHQRPDENVRRKHMWALVWTCSGLLLLSCSICLFWWAKRRDVLHMPGFLAGPCDMSKSVSLLSKHRGTKKTPSTGSVPVALSKESRDVEGGTEGEGTEEGEETEGEEEED.

A signal peptide spans 1-21 (MLGCGIPALGLLLLLQGSADG). Residues 22 to 81 (NGIQGFFYPWSCEGDIWDRESCGGQAAIDSPNLCLRLRCCYRNGVCYHQRPDENVRRKHM) are Extracellular-facing. Residues 31–71 (WSCEGDIWDRESCGGQAAIDSPNLCLRLRCCYRNGVCYHQR) enclose the P-type domain. Disulfide bonds link Cys-33–Cys-61, Cys-43–Cys-60, and Cys-55–Cys-67. A helical membrane pass occupies residues 82-102 (WALVWTCSGLLLLSCSICLFW). Residues 103–177 (WAKRRDVLHM…EETEGEEEED (75 aa)) lie on the Cytoplasmic side of the membrane. The disordered stretch occupies residues 131-177 (KHRGTKKTPSTGSVPVALSKESRDVEGGTEGEGTEEGEETEGEEEED). Residues 157-177 (GGTEGEGTEEGEETEGEEEED) show a composition bias toward acidic residues.

It is found in the membrane. The sequence is that of Transmembrane protein 190 (TMEM190) from Homo sapiens (Human).